Consider the following 1663-residue polypeptide: MATDGASCEPDLSRAPEDAAGAAAEAAKKEFDVDTLSKSELRMLLSVMEGELEARDLVIEALRARRKEVFIQERYGRFNLNDPFLALQRDYEAGAGDKEKKPVCTNPLSILEAVMAHCKKMQERMSAQLAAAESRQKKLEMEKLQLQALEQEHKKLAARLEEERGKNKQVVLMLVKECKQLSGKVIEEAQKLEDIMAKLEEEKKKTNELEEELSAEKRRSTEMEAQMEKQLSEFDTEREQLRAKLNREEAHTTDLKEEIDKMKKMIEQLKRGSDSKPSLSLPRKTKDRRLVSISVGTEGTVTRSVACQTDLVTESADHVKKLPLTMPVKPSTGSPLVSANAKGSVCTSATMARPGIDRQASHGDLIGSSVPAFPPPSANRIEENGPSTDSTPDPTSSTPPLPSNAAPPTTQTPGIAPQNSQAPPMHSLHSPCANASLHPGLNPRIQAARFRFQGNANDPDQNGNTTQSPPSRDMSPTSRENLVAKQLARNTVTQALSRFTSPQAGAPSRPGAPPTGDVGTHPPVGRTSLKTHGVARVDRGNPPPIPPKKPGLSQTPSPPHPQLKVIIDSSRASNTGAKVDNKTVASPPSSLPQGNRVINEDNLPKSSSPQLPPKPSIDLTVAPAGCAVSALATSQVGAWPAATPGLNQPACSDSSLVIPTTIAFCSSINPVSASSCRPGASDSLLVTASGWSPSLTPLLMSGGPAPLAGRPTLLQQAAAQGNVTLLSMLLNEEGLDINYSCEDGHSALYSAAKNGHTDCVRLLLSAEAQINAADKNGFTPLCAAAAQGHFECVELLIAYDANINHAADGGQTPLYLACKNENKECIKLLLEAGTNRSVKTTDGWTPVHAAVDTGNVDSLKLLMYHRIPACGNSFNEEESESGVFDLDGGEESPEGIFKPVVPADLINHANREGWTAAHIAASKGFKNCLEILCRHGGLEPERRDKCNRTVHDVATDDCKHLLENLNALKIPLRISVGEIEPSDYGSDDLECENTICALNIRKQTSWDDFSKAVSQALTNHFQAISSDGWWSLEDVTCNNTTDSNIGLSARSIRSITLGNVPWSVGQSFTQSPWDFMRKNKAEHITVLLSGPQEGCLSSVTYASMIPLQMMQNYLRLVEQYHNVIFHGPEGSLQDYIVHQLALCLKHRQMAAGFSCEIVRAEIDAGFSKEQLLDLFISSACLIPVKQSPSKKKIIIILENLEKSSLSELLRDFLAPLENRSTESPCTFQKGNGMSECYYFHENCFLMGTIAKACLQGSDLLVQQHFRWVQLRWDGEPMQGLLQRFLRRKVVNKFKGQAPSPCDPVCKIVDWALSVWRQLNSCLARLGTPEALLGPKYFLSCPVVPGHAQVTVKWMSKLWNGVIAPRVQEAILSRASVKRQPGFGQTTAKRHPSQGQQAVVKAALSILLNKAVLHGCPLPRAELDQHTADFKGGSFPLSIVSSYNSCNKKKGESGAWRKVNTSPRRKSGRFSLPTWNKPDLSTEGIKNKTISQLNYNRNASLSKQKSLENDLSLTLNLDQRLSLGSDDEADLVKELQSMCSSKSESDISKIADSRDDLRMFDSSGNNPLLSATINNLRMPVSQKEVSPLSSHQTTECSNSKSKTELGVSRVKSFLPVPRSKVTLCSQNTKRSSSSSNTRQIEINNNSKKENWNLHKNEHLDKPNK.

4 disordered regions span residues 1–23 (MATD…AGAA), 203–222 (KKKT…RSTE), 358–440 (RQAS…LHPG), and 454–479 (GNAN…PTSR). Residues 119-276 (KKMQERMSAQ…EQLKRGSDSK (158 aa)) adopt a coiled-coil conformation. Over residues 386-396 (PSTDSTPDPTS) the composition is skewed to low complexity. Polar residues predominate over residues 411–422 (QTPGIAPQNSQA). Asymmetric dimethylarginine is present on Arg498. The disordered stretch occupies residues 499–616 (FTSPQAGAPS…SSPQLPPKPS (118 aa)). A compositionally biased stretch (polar residues) spans 583 to 593 (TVASPPSSLPQ). ANK repeat units lie at residues 709 to 739 (GRPT…DINY), 743 to 772 (DGHS…QINA), 776 to 805 (NGFT…NINH), 809 to 838 (GGQT…NRSV), 842 to 871 (DGWT…PACG), and 912 to 942 (EGWT…EPER). Residues 1446 to 1477 (NKKKGESGAWRKVNTSPRRKSGRFSLPTWNKP) form a disordered region. At Ser1524 the chain carries Phosphoserine. Disordered regions lie at residues 1580–1602 (SQKE…KSKT) and 1618–1663 (SKVT…KPNK). Polar residues predominate over residues 1582–1599 (KEVSPLSSHQTTECSNSK). Positions 1624–1638 (SQNTKRSSSSSNTRQ) are enriched in low complexity. Positions 1645–1663 (SKKENWNLHKNEHLDKPNK) are enriched in basic and acidic residues.

Interacts with CTTN/cortactin SH3 domain. Interacts with STRN, STRN4/zinedin and MOB4/phocein; this interactions mediate the association with the STRIPAK core complex and may regulate dendritic spine distribution of the STRIPAK complex in hippocampal neurons. Activation of glutamate receptors weakens the interaction with STRN and STRN4.

Its subcellular location is the cytoplasm. The protein resides in the cell cortex. It is found in the cell projection. It localises to the dendritic spine. Its function is as follows. Regulates the dendritic spine distribution of CTTN/cortactin in hippocampal neurons, and thus controls dendritic spinogenesis and dendritic spine maintenance. Associates with the striatin-interacting phosphatase and kinase (STRIPAK) core complex to regulate dendritic spine distribution of the STRIPAK complex in hippocampal neurons. The chain is Cortactin-binding protein 2 (CTTNBP2) from Colobus guereza (Mantled guereza).